A 455-amino-acid polypeptide reads, in one-letter code: Probable hexose phosphate transport protein (455 aa).

The next 5 membrane-spanning stretches (helical) occupy residues 34–54 (IFYS…SFTF), 70–90 (LGII…VSGV), 113–133 (IFFG…LNGW), 161–181 (VWST…GFII), and 185–205 (GWRG…LVLI). A disordered region spans residues 219–242 (PIEKYKRDPHHAHHEGKSASEGTE). Helical transmembrane passes span 257-277 (YVLT…IYIV), 302-322 (FCVS…GWLS), 331-351 (GPMN…MWFS), 363-383 (LLFV…LAAA), 394-414 (ASGF…YPLG), and 424-444 (GFFI…LPTW).

It belongs to the major facilitator superfamily. Organophosphate:Pi antiporter (OPA) (TC 2.A.1.4) family.

It localises to the cell membrane. Functionally, transport protein for sugar phosphate uptake. This is Probable hexose phosphate transport protein (uhpC) from Chlamydia pneumoniae (Chlamydophila pneumoniae).